Consider the following 164-residue polypeptide: UPF0262 protein Saro_0143 (164 aa).

This sequence belongs to the UPF0262 family.

The sequence is that of UPF0262 protein Saro_0143 from Novosphingobium aromaticivorans (strain ATCC 700278 / DSM 12444 / CCUG 56034 / CIP 105152 / NBRC 16084 / F199).